Here is a 122-residue protein sequence, read N- to C-terminus: Large ribosomal subunit protein uL14 (122 aa).

It belongs to the universal ribosomal protein uL14 family. As to quaternary structure, part of the 50S ribosomal subunit. Forms a cluster with proteins L3 and L19. In the 70S ribosome, L14 and L19 interact and together make contacts with the 16S rRNA in bridges B5 and B8.

Its function is as follows. Binds to 23S rRNA. Forms part of two intersubunit bridges in the 70S ribosome. In Halothermothrix orenii (strain H 168 / OCM 544 / DSM 9562), this protein is Large ribosomal subunit protein uL14.